We begin with the raw amino-acid sequence, 199 residues long: Thymidylate kinase (199 aa).

ATP is bound at residue 7–14; the sequence is GIDGSGKT.

The protein belongs to the thymidylate kinase family.

It carries out the reaction dTMP + ATP = dTDP + ADP. Its function is as follows. Phosphorylation of dTMP to form dTDP in both de novo and salvage pathways of dTTP synthesis. The sequence is that of Thymidylate kinase from Tropheryma whipplei (strain Twist) (Whipple's bacillus).